We begin with the raw amino-acid sequence, 296 residues long: 4-hydroxybenzoate octaprenyltransferase (296 aa).

The next 8 helical transmembrane spans lie at 28–48 (IGTL…SDGI), 51–71 (LAVL…GCVI), 102–122 (LLLT…LNHL), 143–163 (FFPI…PMAF), 174–194 (AWIL…VYAM), 212–232 (FGRY…LLMA), 233–253 (VLGA…IVLL), and 274–294 (FLAN…HTFF).

Belongs to the UbiA prenyltransferase family. Requires Mg(2+) as cofactor.

The protein resides in the cell inner membrane. The catalysed reaction is all-trans-octaprenyl diphosphate + 4-hydroxybenzoate = 4-hydroxy-3-(all-trans-octaprenyl)benzoate + diphosphate. It functions in the pathway cofactor biosynthesis; ubiquinone biosynthesis. Catalyzes the prenylation of para-hydroxybenzoate (PHB) with an all-trans polyprenyl group. Mediates the second step in the final reaction sequence of ubiquinone-8 (UQ-8) biosynthesis, which is the condensation of the polyisoprenoid side chain with PHB, generating the first membrane-bound Q intermediate 3-octaprenyl-4-hydroxybenzoate. This Neisseria meningitidis serogroup C (strain 053442) protein is 4-hydroxybenzoate octaprenyltransferase.